A 122-amino-acid polypeptide reads, in one-letter code: Nitrogen fixation nifHD region GlnB-like protein 2 (122 aa).

The protein belongs to the P(II) protein family.

Functionally, could be involved in the regulation of nitrogen fixation. This is Nitrogen fixation nifHD region GlnB-like protein 2 (glnBB) from Methanobacterium ivanovii.